The following is a 122-amino-acid chain: Large ribosomal subunit protein bL12 (122 aa).

Belongs to the bacterial ribosomal protein bL12 family. As to quaternary structure, homodimer. Part of the ribosomal stalk of the 50S ribosomal subunit. Forms a multimeric L10(L12)X complex, where L10 forms an elongated spine to which 2 to 4 L12 dimers bind in a sequential fashion. Binds GTP-bound translation factors.

Its function is as follows. Forms part of the ribosomal stalk which helps the ribosome interact with GTP-bound translation factors. Is thus essential for accurate translation. This Mycoplasma mycoides subsp. mycoides SC (strain CCUG 32753 / NCTC 10114 / PG1) protein is Large ribosomal subunit protein bL12.